We begin with the raw amino-acid sequence, 344 residues long: tRNA(Ile)-lysidine synthase (344 aa).

Position 30–35 (30–35) interacts with ATP; the sequence is SGGQDS. Positions 323–344 are disordered; it reads PPPPAPVPPDPGERSPPPSPLY.

The protein belongs to the tRNA(Ile)-lysidine synthase family.

The protein localises to the cytoplasm. It catalyses the reaction cytidine(34) in tRNA(Ile2) + L-lysine + ATP = lysidine(34) in tRNA(Ile2) + AMP + diphosphate + H(+). In terms of biological role, ligates lysine onto the cytidine present at position 34 of the AUA codon-specific tRNA(Ile) that contains the anticodon CAU, in an ATP-dependent manner. Cytidine is converted to lysidine, thus changing the amino acid specificity of the tRNA from methionine to isoleucine. The polypeptide is tRNA(Ile)-lysidine synthase (Thermosynechococcus vestitus (strain NIES-2133 / IAM M-273 / BP-1)).